Here is a 662-residue protein sequence, read N- to C-terminus: MLNKNSASSQSLPRVHSFFNMIPSIMQDDLALTILNDRDNMFSIKSQRSHGEDLIVTPFAQILASLRSVRNNLLSLTNVPASNKSRRPNQSSSASRSGNPPGAPLSQGEEAYTRLATDTIEELDWCLDQLETIQTHRSVSDMASLKFKRMLNKELSHFSESSRSGNQISEYICSTFLDKQQEFDLPSLRVEDNPELVAANAAAGQQSAGQYARSRSPRGPPMSQISGVKRPLSHTNSFTGERLPTFGVETPRENELGTLLGELDTWGIQIFSIGEFSVNRPLTCVAYTIFQSRELLTSLMIPPKTFLNFMSTLEDHYVKDNPFHNSLHAADVTQSTNVLLNTPALEGVFTPLEVGGALFAACIHDVDHPGLTNQFLVNSSSELALMYNDESVLENHHLAVAFKLLQNQGCDIFCNMQKKQRQTLRKMVIDIVLSTDMSKHMSLLADLKTMVETKKVAGSGVLLLDNYTDRIQVLENLVHCADLSNPTKPLPLYKRWVALLMEEFFLQGDKERESGMDISPMCDRHNATIEKSQVGFIDYIVHPLWETWADLVHPDAQDILDTLEENRDYYQSMIPPSPPPSGVDENPQEDRIRFQVTLEESDQENLAELEEGDESGGESTTTGTTGTTAASALSGAGGGGGGGGGMAPRTGGCQNQPQHGGM.

Disordered stretches follow at residues 79–108 (VPAS…LSQG) and 207–245 (SAGQ…RLPT). Positions 80–98 (PASNKSRRPNQSSSASRSG) are enriched in polar residues. The PDEase domain maps to 248–577 (VETPRENELG…DYYQSMIPPS (330 aa)). His-324 functions as the Proton donor in the catalytic mechanism. 324–328 (HNSLH) lines the 3',5'-cyclic AMP pocket. A divalent metal cation contacts are provided by His-328, His-364, Asp-365, and Asp-482. Asp-365, Asp-482, and Gln-533 together coordinate 3',5'-cyclic AMP. A compositionally biased stretch (acidic residues) spans 599-616 (EESDQENLAELEEGDESG). The tract at residues 599–662 (EESDQENLAE…CQNQPQHGGM (64 aa)) is disordered. The span at 617–634 (GESTTTGTTGTTAASALS) shows a compositional bias: low complexity. Gly residues predominate over residues 635 to 646 (GAGGGGGGGGGM). The segment covering 652–662 (GCQNQPQHGGM) has biased composition (polar residues).

The protein belongs to the cyclic nucleotide phosphodiesterase family. PDE4 subfamily. As to quaternary structure, monomer. A divalent metal cation is required as a cofactor.

It catalyses the reaction 3',5'-cyclic AMP + H2O = AMP + H(+). It participates in purine metabolism; 3',5'-cyclic AMP degradation; AMP from 3',5'-cyclic AMP: step 1/1. Functionally, hydrolyzes the second messenger cAMP, which is a key regulator of many important physiological processes. Vital for female fertility. Required for learning/memory. In Drosophila melanogaster (Fruit fly), this protein is 3',5'-cyclic-AMP phosphodiesterase, isoform F.